Here is a 215-residue protein sequence, read N- to C-terminus: L-fuculose phosphate aldolase (215 aa).

Residues 28 to 29 (GN), 43 to 44 (TG), and 71 to 72 (SS) contribute to the substrate site. Glu-73 functions as the Proton donor/acceptor in the catalytic mechanism. Zn(2+) contacts are provided by Glu-73, His-92, His-94, and His-155.

It belongs to the aldolase class II family. AraD/FucA subfamily. In terms of assembly, homotetramer. Requires Zn(2+) as cofactor.

The enzyme catalyses L-fuculose 1-phosphate = (S)-lactaldehyde + dihydroxyacetone phosphate. Its pathway is carbohydrate degradation; L-fucose degradation; L-lactaldehyde and glycerone phosphate from L-fucose: step 3/3. Its activity is regulated as follows. Inhibited by phosphoglycolohydroxamate (PGH). Its function is as follows. Involved in the degradation of L-fucose and D-arabinose. Catalyzes the reversible cleavage of L-fuculose 1-phosphate (Fuc1P) to yield dihydroxyacetone phosphate (DHAP) and L-lactaldehyde. Also able to catalyze the reversible cleavage of D-ribulose 1-phosphate, but FucA has a higher affinity for L-fuculose 1-phosphate and L-lactaldehyde than for D-ribulose 1-phosphate and glycolaldehyde, respectively. FucA possesses a high specificity for the dihydroxyacetone phosphate (DHAP), but accepts a great variety of different aldehydes and has a strong preference for L-configurated alpha-hydroxy aldehydes. FucA generates a vicinal diol unit having the absolute (3R,4R)-cis configuration (D-erythro). The sequence is that of L-fuculose phosphate aldolase from Escherichia coli (strain K12).